The primary structure comprises 208 residues: NAD(P)H-quinone oxidoreductase subunit I (208 aa).

4Fe-4S ferredoxin-type domains lie at 55 to 84 (GRIH…VDWV) and 95 to 124 (RNYS…MTEE). [4Fe-4S] cluster-binding residues include cysteine 64, cysteine 67, cysteine 70, cysteine 74, cysteine 104, cysteine 107, cysteine 110, and cysteine 114.

This sequence belongs to the complex I 23 kDa subunit family. NDH-1 is composed of at least 11 different subunits. The cofactor is [4Fe-4S] cluster.

The protein resides in the cellular thylakoid membrane. It catalyses the reaction a plastoquinone + NADH + (n+1) H(+)(in) = a plastoquinol + NAD(+) + n H(+)(out). The catalysed reaction is a plastoquinone + NADPH + (n+1) H(+)(in) = a plastoquinol + NADP(+) + n H(+)(out). In terms of biological role, NDH-1 shuttles electrons from an unknown electron donor, via FMN and iron-sulfur (Fe-S) centers, to quinones in the respiratory and/or the photosynthetic chain. The immediate electron acceptor for the enzyme in this species is believed to be plastoquinone. Couples the redox reaction to proton translocation, and thus conserves the redox energy in a proton gradient. This chain is NAD(P)H-quinone oxidoreductase subunit I, found in Prochlorococcus marinus (strain MIT 9515).